We begin with the raw amino-acid sequence, 264 residues long: S-adenosylmethionine decarboxylase proenzyme (264 aa).

Residue Ser-112 is the Schiff-base intermediate with substrate; via pyruvic acid of the active site. Ser-112 carries the post-translational modification Pyruvic acid (Ser); by autocatalysis. The active-site Proton acceptor; for processing activity is His-117. Cys-140 (proton donor; for catalytic activity) is an active-site residue.

This sequence belongs to the prokaryotic AdoMetDC family. Type 2 subfamily. In terms of assembly, heterooctamer of four alpha and four beta chains arranged as a tetramer of alpha/beta heterodimers. Pyruvate serves as cofactor. Is synthesized initially as an inactive proenzyme. Formation of the active enzyme involves a self-maturation process in which the active site pyruvoyl group is generated from an internal serine residue via an autocatalytic post-translational modification. Two non-identical subunits are generated from the proenzyme in this reaction, and the pyruvate is formed at the N-terminus of the alpha chain, which is derived from the carboxyl end of the proenzyme. The post-translation cleavage follows an unusual pathway, termed non-hydrolytic serinolysis, in which the side chain hydroxyl group of the serine supplies its oxygen atom to form the C-terminus of the beta chain, while the remainder of the serine residue undergoes an oxidative deamination to produce ammonia and the pyruvoyl group blocking the N-terminus of the alpha chain.

The catalysed reaction is S-adenosyl-L-methionine + H(+) = S-adenosyl 3-(methylsulfanyl)propylamine + CO2. Its pathway is amine and polyamine biosynthesis; S-adenosylmethioninamine biosynthesis; S-adenosylmethioninamine from S-adenosyl-L-methionine: step 1/1. Catalyzes the decarboxylation of S-adenosylmethionine to S-adenosylmethioninamine (dcAdoMet), the propylamine donor required for the synthesis of the polyamines spermine and spermidine from the diamine putrescine. The sequence is that of S-adenosylmethionine decarboxylase proenzyme from Photorhabdus laumondii subsp. laumondii (strain DSM 15139 / CIP 105565 / TT01) (Photorhabdus luminescens subsp. laumondii).